A 158-amino-acid polypeptide reads, in one-letter code: UPF0102 protein GbCGDNIH1_0975 (158 aa).

The protein belongs to the UPF0102 family.

The chain is UPF0102 protein GbCGDNIH1_0975 from Granulibacter bethesdensis (strain ATCC BAA-1260 / CGDNIH1).